The primary structure comprises 61 residues: MSEKKLKITQVRSVIGSTKKQKATIKALGLGRPNYHVDKEDNPCLRGQIRVVQHLVKVEEQ.

It belongs to the universal ribosomal protein uL30 family. As to quaternary structure, part of the 50S ribosomal subunit.

This chain is Large ribosomal subunit protein uL30, found in Chlorobium phaeobacteroides (strain DSM 266 / SMG 266 / 2430).